A 118-amino-acid chain; its full sequence is Basic phospholipase A2 PA-11 (118 aa).

7 disulfide bridges follow: cysteine 11/cysteine 71, cysteine 27/cysteine 117, cysteine 29/cysteine 45, cysteine 44/cysteine 98, cysteine 51/cysteine 91, cysteine 60/cysteine 84, and cysteine 78/cysteine 89. Ca(2+) contacts are provided by tyrosine 28, glycine 30, and glycine 32. Histidine 48 is an active-site residue. Aspartate 49 contacts Ca(2+). Residue aspartate 92 is part of the active site.

This sequence belongs to the phospholipase A2 family. Group I subfamily. D49 sub-subfamily. It depends on Ca(2+) as a cofactor. Expressed by the venom gland.

Its subcellular location is the secreted. The enzyme catalyses a 1,2-diacyl-sn-glycero-3-phosphocholine + H2O = a 1-acyl-sn-glycero-3-phosphocholine + a fatty acid + H(+). In terms of biological role, PLA2 catalyzes the calcium-dependent hydrolysis of the 2-acyl groups in 3-sn-phosphoglycerides. The sequence is that of Basic phospholipase A2 PA-11 from Pseudechis australis (Mulga snake).